The chain runs to 425 residues: UDP-N-acetylglucosamine 1-carboxyvinyltransferase (425 aa).

22–23 contributes to the phosphoenolpyruvate binding site; the sequence is KN. Position 91 (Arg-91) interacts with UDP-N-acetyl-alpha-D-glucosamine. Cys-115 acts as the Proton donor in catalysis. Residue Cys-115 is modified to 2-(S-cysteinyl)pyruvic acid O-phosphothioketal. UDP-N-acetyl-alpha-D-glucosamine contacts are provided by residues 120–124, Asp-309, and Ile-331; that span reads RPVDL.

It belongs to the EPSP synthase family. MurA subfamily.

Its subcellular location is the cytoplasm. It catalyses the reaction phosphoenolpyruvate + UDP-N-acetyl-alpha-D-glucosamine = UDP-N-acetyl-3-O-(1-carboxyvinyl)-alpha-D-glucosamine + phosphate. Its pathway is cell wall biogenesis; peptidoglycan biosynthesis. Functionally, cell wall formation. Adds enolpyruvyl to UDP-N-acetylglucosamine. This is UDP-N-acetylglucosamine 1-carboxyvinyltransferase from Akkermansia muciniphila (strain ATCC BAA-835 / DSM 22959 / JCM 33894 / BCRC 81048 / CCUG 64013 / CIP 107961 / Muc).